A 324-amino-acid chain; its full sequence is Beta-ketoacyl-[acyl-carrier-protein] synthase III (324 aa).

Catalysis depends on residues Cys-111 and His-251. The interval 252–256 (QANTR) is ACP-binding. Asn-281 is a catalytic residue.

It belongs to the thiolase-like superfamily. FabH family. As to quaternary structure, homodimer.

Its subcellular location is the plastid. The protein resides in the chloroplast. It carries out the reaction malonyl-[ACP] + acetyl-CoA + H(+) = 3-oxobutanoyl-[ACP] + CO2 + CoA. Its pathway is lipid metabolism; fatty acid biosynthesis. In terms of biological role, catalyzes the condensation reaction of fatty acid synthesis by the addition to an acyl acceptor of two carbons from malonyl-ACP. Catalyzes the first condensation reaction which initiates fatty acid synthesis and may therefore play a role in governing the total rate of fatty acid production. Possesses both acetoacetyl-ACP synthase and acetyl transacylase activities. Its substrate specificity determines the biosynthesis of branched-chain and/or straight-chain of fatty acids. This is Beta-ketoacyl-[acyl-carrier-protein] synthase III from Pyropia yezoensis (Susabi-nori).